The following is a 314-amino-acid chain: Ribosomal protein L11 methyltransferase (314 aa).

Positions 152, 184, 206, and 248 each coordinate S-adenosyl-L-methionine.

This sequence belongs to the methyltransferase superfamily. PrmA family.

The protein localises to the cytoplasm. It carries out the reaction L-lysyl-[protein] + 3 S-adenosyl-L-methionine = N(6),N(6),N(6)-trimethyl-L-lysyl-[protein] + 3 S-adenosyl-L-homocysteine + 3 H(+). Functionally, methylates ribosomal protein L11. This Geotalea daltonii (strain DSM 22248 / JCM 15807 / FRC-32) (Geobacter daltonii) protein is Ribosomal protein L11 methyltransferase.